The primary structure comprises 58 residues: Alpha-conotoxin AuIB (58 aa).

The signal sequence occupies residues 1–16 (MFTVFLLVVLATTVVS). Residues 17 to 39 (FTSDRASDGRKDAASGLIALTMK) constitute a propeptide that is removed on maturation. 2 disulfides stabilise this stretch: cysteine 41/cysteine 47 and cysteine 42/cysteine 54. Cysteine 54 carries the cysteine amide modification.

Expressed by the venom duct.

Its subcellular location is the secreted. Its function is as follows. Alpha-conotoxins act on postsynaptic membranes, they bind to the nicotinic acetylcholine receptors (nAChR) and thus inhibit them. This toxin blocks mammalian nAChR alpha-3-beta-4/CHRNA3-CHRNB4 subunits. Also exhibits inhibition of D.melanogaster alpha-7/CHRNA7 nAChRs. This Conus aulicus (Princely cone) protein is Alpha-conotoxin AuIB.